A 462-amino-acid chain; its full sequence is ATP-dependent protease ATPase subunit HslU (462 aa).

ATP is bound by residues Ile-21, 63 to 68 (GVGKTE), Asp-275, Glu-340, and Arg-412.

It belongs to the ClpX chaperone family. HslU subfamily. In terms of assembly, a double ring-shaped homohexamer of HslV is capped on each side by a ring-shaped HslU homohexamer. The assembly of the HslU/HslV complex is dependent on binding of ATP.

Its subcellular location is the cytoplasm. ATPase subunit of a proteasome-like degradation complex; this subunit has chaperone activity. The binding of ATP and its subsequent hydrolysis by HslU are essential for unfolding of protein substrates subsequently hydrolyzed by HslV. HslU recognizes the N-terminal part of its protein substrates and unfolds these before they are guided to HslV for hydrolysis. This is ATP-dependent protease ATPase subunit HslU from Pseudothermotoga lettingae (strain ATCC BAA-301 / DSM 14385 / NBRC 107922 / TMO) (Thermotoga lettingae).